Here is a 480-residue protein sequence, read N- to C-terminus: Aspartyl/glutamyl-tRNA(Asn/Gln) amidotransferase subunit B (480 aa).

It belongs to the GatB/GatE family. GatB subfamily. Heterotrimer of A, B and C subunits.

The catalysed reaction is L-glutamyl-tRNA(Gln) + L-glutamine + ATP + H2O = L-glutaminyl-tRNA(Gln) + L-glutamate + ADP + phosphate + H(+). It carries out the reaction L-aspartyl-tRNA(Asn) + L-glutamine + ATP + H2O = L-asparaginyl-tRNA(Asn) + L-glutamate + ADP + phosphate + 2 H(+). In terms of biological role, allows the formation of correctly charged Asn-tRNA(Asn) or Gln-tRNA(Gln) through the transamidation of misacylated Asp-tRNA(Asn) or Glu-tRNA(Gln) in organisms which lack either or both of asparaginyl-tRNA or glutaminyl-tRNA synthetases. The reaction takes place in the presence of glutamine and ATP through an activated phospho-Asp-tRNA(Asn) or phospho-Glu-tRNA(Gln). This Streptococcus pneumoniae serotype 19F (strain G54) protein is Aspartyl/glutamyl-tRNA(Asn/Gln) amidotransferase subunit B.